The following is a 259-amino-acid chain: Cobalt transport protein CbiM (259 aa).

The first 25 residues, 1–25 (MFRRTTWLTLYLLLAMAALARPAFA), serve as a signal peptide directing secretion. The next 6 membrane-spanning stretches (helical) occupy residues 31–51 (GFLPFNWAAFWFIVVLPFWIW), 68–88 (MLLGLAGAYTFVLSALKLPSV), 100–120 (LGAVLFGPAAMSILGGIVLLF), 132–152 (TLGANTFSMAVVGPFVAYGLY), 160–180 (GSMPLAVFLAATLGDLMTYVT), and 206–226 (IFAVTQLPLAISEGFLTVIVF).

It belongs to the CbiM family. As to quaternary structure, forms an energy-coupling factor (ECF) transporter complex composed of an ATP-binding protein (A component, CbiO), a transmembrane protein (T component, CbiQ) and 2 possible substrate-capture proteins (S components, CbiM and CbiN) of unknown stoichimetry.

It is found in the cell membrane. Its pathway is cofactor biosynthesis; adenosylcobalamin biosynthesis. Its function is as follows. Part of the energy-coupling factor (ECF) transporter complex CbiMNOQ involved in cobalt import. This Moorella thermoacetica (strain ATCC 39073 / JCM 9320) protein is Cobalt transport protein CbiM.